The sequence spans 345 residues: NADPH dehydrogenase (345 aa).

23–26 is a binding site for FMN; sequence SPMC. Tyr-28 contacts substrate. Positions 60 and 102 each coordinate FMN. 164-167 is a binding site for substrate; that stretch reads HGAH. FMN contacts are provided by residues Arg-215 and 307–308; that span reads GR.

It belongs to the NADH:flavin oxidoreductase/NADH oxidase family. NamA subfamily. As to quaternary structure, homotetramer. Requires FMN as cofactor.

The enzyme catalyses A + NADPH + H(+) = AH2 + NADP(+). In terms of biological role, catalyzes the reduction of the double bond of an array of alpha,beta-unsaturated aldehydes and ketones. It also reduces the nitro group of nitroester and nitroaromatic compounds. It could have a role in detoxification processes. This chain is NADPH dehydrogenase, found in Bacillus cereus (strain G9842).